Reading from the N-terminus, the 344-residue chain is MAMYTNQTAEELETWRCTSDGIFKSQNSIWMKINFVFVFILIFLTFYLSFKAARVLKNHNVYSKGSQILLMITLLNANLNQLIFLEIRIRHLVHIFINSEDPCKIEFHSPECTYDQTIYAFTSVMSTGLLSALTFDRFFALYASTVYVRNSKDSAYMLITVSIIVTVIVHIRTYGGVSRAGYVPSCTYPPQLSLNTYQVVNNAIFWIIMANCVLTIAVLLLNIYKDKRIKKSVFDTKTRYNSFENVLTTKAICSVTSTQFVFLSFSTAALAIIRTLEAGMSEEVFHINIQYINGGVYGNLSIPVLIYLKTNQCILQRRKSIDKMTNHTGTVDSHISSLKTAWET.

Transmembrane regions (helical) follow at residues Ser-28–Leu-48, Gln-67–Ile-87, Gly-128–Val-148, Met-157–Val-177, Ala-203–Ile-223, Ile-252–Ile-272, and Ile-287–Tyr-307.

It belongs to the nematode receptor-like protein sra family.

Its subcellular location is the membrane. The sequence is that of Serpentine receptor class alpha-27 (sra-27) from Caenorhabditis elegans.